The chain runs to 320 residues: Glutaminyl-peptide cyclotransferase (320 aa).

Residues 1–12 (MATRSPYKRQTK) are compositionally biased toward basic residues. Residues 1–22 (MATRSPYKRQTKRSMIQSLPAS) form a disordered region. The Cytoplasmic segment spans residues 1–36 (MATRSPYKRQTKRSMIQSLPASSSASSRRRFISRKR). Residues 37-57 (FAMMIPLALLSGAVFLFFMPF) form a helical; Signal-anchor for type II membrane protein membrane-spanning segment. Residues 58–320 (NSWGQSSGSS…GNYIEQQCLV (263 aa)) lie on the Lumenal side of the membrane. N-linked (GlcNAc...) asparagine glycosylation is found at N99 and N163.

Belongs to the plant glutaminyl-peptide cyclotransferase family. In terms of processing, glycosylated.

It localises to the endoplasmic reticulum membrane. The enzyme catalyses N-terminal L-glutaminyl-[peptide] = N-terminal 5-oxo-L-prolyl-[peptide] + NH4(+). Functionally, converts glutamine and N-terminal glutamyl residues in peptides to 5-oxoproline and 5-oxoproline residues. Not involved in the major pathway for 5-oxoproline production. The sequence is that of Glutaminyl-peptide cyclotransferase (QCT) from Arabidopsis thaliana (Mouse-ear cress).